The chain runs to 266 residues: Tryptophan synthase alpha chain (266 aa).

Active-site proton acceptor residues include Glu-47 and Asp-58.

This sequence belongs to the TrpA family. In terms of assembly, tetramer of two alpha and two beta chains.

It carries out the reaction (1S,2R)-1-C-(indol-3-yl)glycerol 3-phosphate + L-serine = D-glyceraldehyde 3-phosphate + L-tryptophan + H2O. Its pathway is amino-acid biosynthesis; L-tryptophan biosynthesis; L-tryptophan from chorismate: step 5/5. Its function is as follows. The alpha subunit is responsible for the aldol cleavage of indoleglycerol phosphate to indole and glyceraldehyde 3-phosphate. The polypeptide is Tryptophan synthase alpha chain (Leptospira biflexa serovar Patoc (strain Patoc 1 / Ames)).